The primary structure comprises 107 residues: UPF0060 membrane protein Sala_0701 (107 aa).

The next 4 membrane-spanning stretches (helical) occupy residues 4–24 (FAYIGAALAEIAGCFAFWAWL), 30–50 (VWWVVPGIASLALFAYLLTLV), 60–80 (AAYGGVYIAAALLWLWAVEGA), and 87–107 (LIGAAVCLGGAAIILFGPRGG).

This sequence belongs to the UPF0060 family.

Its subcellular location is the cell inner membrane. The protein is UPF0060 membrane protein Sala_0701 of Sphingopyxis alaskensis (strain DSM 13593 / LMG 18877 / RB2256) (Sphingomonas alaskensis).